The chain runs to 118 residues: Large ribosomal subunit protein uL24 (118 aa).

This sequence belongs to the universal ribosomal protein uL24 family. In terms of assembly, part of the 50S ribosomal subunit.

Functionally, one of two assembly initiator proteins, it binds directly to the 5'-end of the 23S rRNA, where it nucleates assembly of the 50S subunit. In terms of biological role, one of the proteins that surrounds the polypeptide exit tunnel on the outside of the subunit. The sequence is that of Large ribosomal subunit protein uL24 from Prochlorococcus marinus (strain MIT 9301).